The primary structure comprises 240 residues: Pyridoxine 5'-phosphate synthase (240 aa).

Asn7 contacts 3-amino-2-oxopropyl phosphate. 9–10 (DH) provides a ligand contact to 1-deoxy-D-xylulose 5-phosphate. Residue Arg18 coordinates 3-amino-2-oxopropyl phosphate. Residue His43 is the Proton acceptor of the active site. Arg45 and His50 together coordinate 1-deoxy-D-xylulose 5-phosphate. Residue Glu70 is the Proton acceptor of the active site. Thr100 contributes to the 1-deoxy-D-xylulose 5-phosphate binding site. The active-site Proton donor is the His191. 3-amino-2-oxopropyl phosphate-binding positions include Gly192 and 213–214 (GH).

This sequence belongs to the PNP synthase family. In terms of assembly, homooctamer; tetramer of dimers.

Its subcellular location is the cytoplasm. It catalyses the reaction 3-amino-2-oxopropyl phosphate + 1-deoxy-D-xylulose 5-phosphate = pyridoxine 5'-phosphate + phosphate + 2 H2O + H(+). It functions in the pathway cofactor biosynthesis; pyridoxine 5'-phosphate biosynthesis; pyridoxine 5'-phosphate from D-erythrose 4-phosphate: step 5/5. Catalyzes the complicated ring closure reaction between the two acyclic compounds 1-deoxy-D-xylulose-5-phosphate (DXP) and 3-amino-2-oxopropyl phosphate (1-amino-acetone-3-phosphate or AAP) to form pyridoxine 5'-phosphate (PNP) and inorganic phosphate. This chain is Pyridoxine 5'-phosphate synthase, found in Synechococcus elongatus (strain ATCC 33912 / PCC 7942 / FACHB-805) (Anacystis nidulans R2).